The chain runs to 248 residues: Pyridoxine 5'-phosphate synthase (248 aa).

Residue Asn12 coordinates 3-amino-2-oxopropyl phosphate. 14-15 contributes to the 1-deoxy-D-xylulose 5-phosphate binding site; sequence DH. Residue Arg23 participates in 3-amino-2-oxopropyl phosphate binding. His48 serves as the catalytic Proton acceptor. 1-deoxy-D-xylulose 5-phosphate is bound by residues Arg50 and His55. The active-site Proton acceptor is the Glu75. Thr105 is a 1-deoxy-D-xylulose 5-phosphate binding site. The active-site Proton donor is His196. Residues Gly197 and 218–219 contribute to the 3-amino-2-oxopropyl phosphate site; that span reads GH.

Belongs to the PNP synthase family. Homooctamer; tetramer of dimers.

It localises to the cytoplasm. The catalysed reaction is 3-amino-2-oxopropyl phosphate + 1-deoxy-D-xylulose 5-phosphate = pyridoxine 5'-phosphate + phosphate + 2 H2O + H(+). The protein operates within cofactor biosynthesis; pyridoxine 5'-phosphate biosynthesis; pyridoxine 5'-phosphate from D-erythrose 4-phosphate: step 5/5. Its function is as follows. Catalyzes the complicated ring closure reaction between the two acyclic compounds 1-deoxy-D-xylulose-5-phosphate (DXP) and 3-amino-2-oxopropyl phosphate (1-amino-acetone-3-phosphate or AAP) to form pyridoxine 5'-phosphate (PNP) and inorganic phosphate. The polypeptide is Pyridoxine 5'-phosphate synthase (Pseudomonas aeruginosa (strain UCBPP-PA14)).